The sequence spans 63 residues: Keratin-associated protein 19-7 (63 aa).

It belongs to the KRTAP type 19 family. Interacts with hair keratins.

Its function is as follows. In the hair cortex, hair keratin intermediate filaments are embedded in an interfilamentous matrix, consisting of hair keratin-associated proteins (KRTAP), which are essential for the formation of a rigid and resistant hair shaft through their extensive disulfide bond cross-linking with abundant cysteine residues of hair keratins. The matrix proteins include the high-sulfur and high-glycine-tyrosine keratins. The polypeptide is Keratin-associated protein 19-7 (KRTAP19-7) (Homo sapiens (Human)).